The chain runs to 242 residues: Uridylate kinase (242 aa).

An ATP-binding site is contributed by 15–18 (KLSG). An involved in allosteric activation by GTP region spans residues 23–28 (GDEGFG). Residue Gly-57 participates in UMP binding. 2 residues coordinate ATP: Gly-58 and Arg-62. Residues Asp-77 and 138 to 145 (TGNPFCTT) each bind UMP. Positions 165, 171, and 174 each coordinate ATP.

It belongs to the UMP kinase family. As to quaternary structure, homohexamer.

It is found in the cytoplasm. The enzyme catalyses UMP + ATP = UDP + ADP. It functions in the pathway pyrimidine metabolism; CTP biosynthesis via de novo pathway; UDP from UMP (UMPK route): step 1/1. Allosterically activated by GTP. Inhibited by UTP. In terms of biological role, catalyzes the reversible phosphorylation of UMP to UDP. The polypeptide is Uridylate kinase (Shewanella sp. (strain MR-4)).